We begin with the raw amino-acid sequence, 713 residues long: Polyribonucleotide nucleotidyltransferase (713 aa).

2 residues coordinate Mg(2+): D494 and D500. One can recognise a KH domain in the interval 561–623 (PSFSTMTIPK…EAVQSAEKRV (63 aa)). Residues 633–702 (GDVYQGTVKS…KSGKYKLSRK (70 aa)) enclose the S1 motif domain.

This sequence belongs to the polyribonucleotide nucleotidyltransferase family. Mg(2+) is required as a cofactor.

It localises to the cytoplasm. It catalyses the reaction RNA(n+1) + phosphate = RNA(n) + a ribonucleoside 5'-diphosphate. In terms of biological role, involved in mRNA degradation. Catalyzes the phosphorolysis of single-stranded polyribonucleotides processively in the 3'- to 5'-direction. The sequence is that of Polyribonucleotide nucleotidyltransferase from Amoebophilus asiaticus (strain 5a2).